The following is a 259-amino-acid chain: Phosphatidylglycerol--prolipoprotein diacylglyceryl transferase (259 aa).

The next 7 helical transmembrane spans lie at 9–29 (LGPL…ILAV), 48–68 (DFIL…YVIF), 83–103 (IWHG…VLFI), 114–133 (DFLD…GRWG), 167–187 (TPTF…IMIL), 197–217 (GEVA…IEGM), and 227–247 (LRVS…LIVI). Residue arginine 131 coordinates a 1,2-diacyl-sn-glycero-3-phospho-(1'-sn-glycerol).

Belongs to the Lgt family.

It localises to the cell membrane. It carries out the reaction L-cysteinyl-[prolipoprotein] + a 1,2-diacyl-sn-glycero-3-phospho-(1'-sn-glycerol) = an S-1,2-diacyl-sn-glyceryl-L-cysteinyl-[prolipoprotein] + sn-glycerol 1-phosphate + H(+). Its pathway is protein modification; lipoprotein biosynthesis (diacylglyceryl transfer). Functionally, catalyzes the transfer of the diacylglyceryl group from phosphatidylglycerol to the sulfhydryl group of the N-terminal cysteine of a prolipoprotein, the first step in the formation of mature lipoproteins. This is Phosphatidylglycerol--prolipoprotein diacylglyceryl transferase from Streptococcus mutans serotype c (strain ATCC 700610 / UA159).